A 229-amino-acid polypeptide reads, in one-letter code: Large ribosomal subunit protein uL1 (229 aa).

It belongs to the universal ribosomal protein uL1 family. As to quaternary structure, part of the 50S ribosomal subunit.

Its function is as follows. Binds directly to 23S rRNA. The L1 stalk is quite mobile in the ribosome, and is involved in E site tRNA release. In terms of biological role, protein L1 is also a translational repressor protein, it controls the translation of the L11 operon by binding to its mRNA. This chain is Large ribosomal subunit protein uL1, found in Chlorobium chlorochromatii (strain CaD3).